Reading from the N-terminus, the 331-residue chain is 2-hydroxyacid dehydrogenase homolog (331 aa).

NAD(+) contacts are provided by residues 154–155 (KI), 232–234 (TSR), and aspartate 258. Arginine 234 is an active-site residue. Glutamate 263 is a catalytic residue. The Proton donor role is filled by histidine 295. Residue 295 to 298 (HQAF) participates in NAD(+) binding.

This sequence belongs to the D-isomer specific 2-hydroxyacid dehydrogenase family.

The polypeptide is 2-hydroxyacid dehydrogenase homolog (ddh) (Haemophilus influenzae (strain ATCC 51907 / DSM 11121 / KW20 / Rd)).